The chain runs to 113 residues: Putative pterin-4-alpha-carbinolamine dehydratase (113 aa).

Belongs to the pterin-4-alpha-carbinolamine dehydratase family.

It catalyses the reaction (4aS,6R)-4a-hydroxy-L-erythro-5,6,7,8-tetrahydrobiopterin = (6R)-L-erythro-6,7-dihydrobiopterin + H2O. This Rickettsia bellii (strain OSU 85-389) protein is Putative pterin-4-alpha-carbinolamine dehydratase.